Consider the following 147-residue polypeptide: Nucleoside diphosphate kinase (147 aa).

Positions 11, 59, 87, 93, 104, and 114 each coordinate ATP. The active-site Pros-phosphohistidine intermediate is the H117.

Belongs to the NDK family. As to quaternary structure, homotetramer. Requires Mg(2+) as cofactor.

It localises to the cytoplasm. It carries out the reaction a 2'-deoxyribonucleoside 5'-diphosphate + ATP = a 2'-deoxyribonucleoside 5'-triphosphate + ADP. The enzyme catalyses a ribonucleoside 5'-diphosphate + ATP = a ribonucleoside 5'-triphosphate + ADP. Its function is as follows. Major role in the synthesis of nucleoside triphosphates other than ATP. The ATP gamma phosphate is transferred to the NDP beta phosphate via a ping-pong mechanism, using a phosphorylated active-site intermediate. This chain is Nucleoside diphosphate kinase, found in Anaeromyxobacter sp. (strain K).